Reading from the N-terminus, the 72-residue chain is UPF0154 protein BLi02038/BL02936 (72 aa).

The chain crosses the membrane as a helical span at residues 4 to 24 (WVVILVGVLALLAGVALGFFI).

This sequence belongs to the UPF0154 family.

Its subcellular location is the cell membrane. The sequence is that of UPF0154 protein BLi02038/BL02936 from Bacillus licheniformis (strain ATCC 14580 / DSM 13 / JCM 2505 / CCUG 7422 / NBRC 12200 / NCIMB 9375 / NCTC 10341 / NRRL NRS-1264 / Gibson 46).